The primary structure comprises 254 residues: NFU1 iron-sulfur cluster scaffold homolog, mitochondrial (254 aa).

The transit peptide at 1–9 directs the protein to the mitochondrion; the sequence is MAATARRGW. A nifU region spans residues 173 to 241; it reads IKELLDTRIR…IPEVEGVEQV (69 aa). [4Fe-4S] cluster is bound by residues Cys-210 and Cys-213.

The protein belongs to the NifU family. Monomer and homohexamer; the apo-NFU1 is a monomer, while the holo-NFU1 is a hexamer composed of a trimer of dimer that is probably linked by some 4Fe-4S cluster. Interacts with HIRA and EPM2A/laforin. Interacts with BOLA3. Interacts with HSPA9. Ubiquitous. Expression in adult lung is weak compared to fetal lung.

It is found in the mitochondrion. Its subcellular location is the cytoplasm. It localises to the cytosol. Functionally, iron-sulfur cluster scaffold protein which can assemble [4Fe-4S] clusters and deliver them to target proteins. In Homo sapiens (Human), this protein is NFU1 iron-sulfur cluster scaffold homolog, mitochondrial (NFU1).